The chain runs to 462 residues: Acetate--CoA ligase [ADP-forming] I subunit alpha (462 aa).

This sequence belongs to the acetate CoA ligase alpha subunit family. In terms of assembly, heterotetramer of two alpha and two beta subunits.

It localises to the cytoplasm. The catalysed reaction is acetate + ATP + CoA = acetyl-CoA + ADP + phosphate. Its activity is regulated as follows. Activity is dependent on magnesium. Functionally, catalyzes the reversible formation of acetate and ATP from acetyl-CoA by using ADP and phosphate. Can use other substrates such as isobutyryl-CoA, propionyl-CoA and butyryl-CoA, but not indoleacetyl-CoA, phenylacetyl-CoA or succinyl-CoA. Seems to be involved primarily in the conversion of acetyl-CoA to acetate. Participates in the degradation of branched-chain amino acids via branched-chain-acyl-CoA esters. The sequence is that of Acetate--CoA ligase [ADP-forming] I subunit alpha from Pyrococcus furiosus (strain ATCC 43587 / DSM 3638 / JCM 8422 / Vc1).